A 229-amino-acid polypeptide reads, in one-letter code: GTP cyclohydrolase 1 (229 aa).

Residues Met-1 to Pro-31 form a disordered region. Residues Asn-7 to Leu-16 are compositionally biased toward polar residues. Zn(2+) contacts are provided by Cys-117, His-120, and Cys-188.

This sequence belongs to the GTP cyclohydrolase I family. Toroid-shaped homodecamer, composed of two pentamers of five dimers.

The catalysed reaction is GTP + H2O = 7,8-dihydroneopterin 3'-triphosphate + formate + H(+). It functions in the pathway cofactor biosynthesis; 7,8-dihydroneopterin triphosphate biosynthesis; 7,8-dihydroneopterin triphosphate from GTP: step 1/1. The protein is GTP cyclohydrolase 1 of Rhodopirellula baltica (strain DSM 10527 / NCIMB 13988 / SH1).